We begin with the raw amino-acid sequence, 1441 residues long: Gag-Pol polyprotein (1441 aa).

G2 is lipidated: N-myristoyl glycine; by host. The interval 7 to 31 (VLSGGELDRWENIRLRPGGKKKYKL) is interaction with Gp41. The tract at residues 8-43 (LSGGELDRWENIRLRPGGKKKYKLKHVVWASRELER) is interaction with host CALM1. Positions 12 to 19 (ELDRWENI) are interaction with host AP3D1. The interaction with membrane phosphatidylinositol 4,5-bisphosphate and RNA stretch occupies residues 14-33 (DRWENIRLRPGGKKKYKLKH). The Nuclear export signal motif lies at 16–22 (WENIRLR). The short motif at 26 to 32 (KKKYKLK) is the Nuclear localization signal element. The segment at 73–77 (EELKS) is interaction with membrane phosphatidylinositol 4,5-bisphosphate. The segment at 106-131 (EEQNKSKKKAQQAAADTGNRGNSSQV) is disordered. The residue at position 135 (Y135) is a Phosphotyrosine; by host. The segment at 192-230 (NTVGGHQAAMQMLKETINEEAAEWDRLHPVHAGPITPGQ) is interaction with human PPIA/CYPA and NUP153. Positions 280 to 366 (YSPSSILDIR…GGPGHKARVL (87 aa)) are dimerization/Multimerization of capsid protein p24. CCHC-type zinc fingers lie at residues 393-410 (IKCF…NCRA) and 414-431 (RGCW…DCTE). Positions 451–460 (SSEQNRANSP) are enriched in polar residues. The tract at residues 451–489 (SSEQNRANSPTRRELQVWGRDNNSLSEAGEEAGDDRQGP) is disordered. Residues 495 to 499 (PQITL) are dimerization of protease. The Peptidase A2 domain maps to 514-583 (KEALLDTGAD…TPVNIIGRNL (70 aa)). D519 acts as the For protease activity; shared with dimeric partner in catalysis. Dimerization of protease regions lie at residues 543–549 (GIGGFIK) and 582–594 (NLLT…LNFP). The 191-residue stretch at 637–827 (EGKISKIGPE…PPFLWMGYEL (191 aa)) folds into the Reverse transcriptase domain. Mg(2+) contacts are provided by D703, D778, and D779. The RT 'primer grip' stretch occupies residues 820–828 (FLWMGYELH). The short motif at 991–1007 (WETWWTEYTXATWIPEW) is the Tryptophan repeat motif element. One can recognise an RNase H type-1 domain in the interval 1027-1150 (IVGAETFYVD…VDKLVSAGIR (124 aa)). Mg(2+)-binding residues include D1036, E1071, D1091, and D1142. Residues 1156 to 1197 (DGIDKAQEDHEKYHSNWRAMASDFNLPPIVAKEIVASCDKCQ) form an Integrase-type zinc finger. Positions 1165, 1169, 1193, and 1196 each coordinate Zn(2+). Residues 1207–1357 (VDCSPGIWQL…SAGERIVGII (151 aa)) enclose the Integrase catalytic domain. Mg(2+) is bound by residues D1217, D1269, and E1305. Residues 1376–1423 (FRVYYRDSRDPLWKGPAKLLWKGEGAVVIQDNNDIKVVPRRKAKVIRD) constitute a DNA-binding region (integrase-type).

In terms of assembly, homotrimer; further assembles as hexamers of trimers. Interacts with gp41 (via C-terminus). Interacts with host CALM1; this interaction induces a conformational change in the Matrix protein, triggering exposure of the myristate group. Interacts with host AP3D1; this interaction allows the polyprotein trafficking to multivesicular bodies during virus assembly. Part of the pre-integration complex (PIC) which is composed of viral genome, matrix protein, Vpr and integrase. As to quaternary structure, homodimer; the homodimer further multimerizes as homohexamers or homopentamers. Interacts with human PPIA/CYPA; This interaction stabilizes the capsid. Interacts with human NUP153. Interacts with host PDZD8; this interaction stabilizes the capsid. Interacts with monkey TRIM5; this interaction destabilizes the capsid. Homodimer, whose active site consists of two apposed aspartic acid residues. In terms of assembly, heterodimer of p66 RT and p51 RT (RT p66/p51). Heterodimerization of RT is essential for DNA polymerase activity. The overall folding of the subdomains is similar in p66 RT and p51 RT but the spatial arrangements of the subdomains are dramatically different. As to quaternary structure, homotetramer; may further associate as a homohexadecamer. Part of the pre-integration complex (PIC) which is composed of viral genome, matrix protein, Vpr and integrase. Interacts with human SMARCB1/INI1 and human PSIP1/LEDGF isoform 1. Interacts with human KPNA3; this interaction might play a role in nuclear import of the pre-integration complex. Interacts with human NUP153; this interaction might play a role in nuclear import of the pre-integration complex. Mg(2+) serves as cofactor. Post-translationally, specific enzymatic cleavages by the viral protease yield mature proteins. The protease is released by autocatalytic cleavage. The polyprotein is cleaved during and after budding, this process is termed maturation. Proteolytic cleavage of p66 RT removes the RNase H domain to yield the p51 RT subunit. Nucleocapsid protein p7 might be further cleaved after virus entry. In terms of processing, tyrosine phosphorylated presumably in the virion by a host kinase. Phosphorylation is apparently not a major regulator of membrane association. Phosphorylated possibly by host MAPK1; this phosphorylation is necessary for Pin1-mediated virion uncoating. Post-translationally, methylated by host PRMT6, impairing its function by reducing RNA annealing and the initiation of reverse transcription.

It is found in the host cell membrane. The protein resides in the host endosome. Its subcellular location is the host multivesicular body. The protein localises to the virion membrane. It localises to the host nucleus. It is found in the host cytoplasm. The protein resides in the virion. The enzyme catalyses Specific for a P1 residue that is hydrophobic, and P1' variable, but often Pro.. It catalyses the reaction Endohydrolysis of RNA in RNA/DNA hybrids. Three different cleavage modes: 1. sequence-specific internal cleavage of RNA. Human immunodeficiency virus type 1 and Moloney murine leukemia virus enzymes prefer to cleave the RNA strand one nucleotide away from the RNA-DNA junction. 2. RNA 5'-end directed cleavage 13-19 nucleotides from the RNA end. 3. DNA 3'-end directed cleavage 15-20 nucleotides away from the primer terminus.. The catalysed reaction is 3'-end directed exonucleolytic cleavage of viral RNA-DNA hybrid.. It carries out the reaction DNA(n) + a 2'-deoxyribonucleoside 5'-triphosphate = DNA(n+1) + diphosphate. Its activity is regulated as follows. Protease: The viral protease is inhibited by many synthetic protease inhibitors (PIs), such as amprenavir, atazanavir, indinavir, loprinavir, nelfinavir, ritonavir and saquinavir. Use of protease inhibitors in tritherapy regimens permit more ambitious therapeutic strategies. Reverse transcriptase/ribonuclease H: RT can be inhibited either by nucleoside RT inhibitors (NRTIs) or by non nucleoside RT inhibitors (NNRTIs). NRTIs act as chain terminators, whereas NNRTIs inhibit DNA polymerization by binding a small hydrophobic pocket near the RT active site and inducing an allosteric change in this region. Classical NRTIs are abacavir, adefovir (PMEA), didanosine (ddI), lamivudine (3TC), stavudine (d4T), tenofovir (PMPA), zalcitabine (ddC), and zidovudine (AZT). Classical NNRTIs are atevirdine (BHAP U-87201E), delavirdine, efavirenz (DMP-266), emivirine (I-EBU), and nevirapine (BI-RG-587). The tritherapies used as a basic effective treatment of AIDS associate two NRTIs and one NNRTI. Mediates, with Gag polyprotein, the essential events in virion assembly, including binding the plasma membrane, making the protein-protein interactions necessary to create spherical particles, recruiting the viral Env proteins, and packaging the genomic RNA via direct interactions with the RNA packaging sequence (Psi). Gag-Pol polyprotein may regulate its own translation, by the binding genomic RNA in the 5'-UTR. At low concentration, the polyprotein would promote translation, whereas at high concentration, the polyprotein would encapsidate genomic RNA and then shut off translation. Its function is as follows. Targets the polyprotein to the plasma membrane via a multipartite membrane-binding signal, that includes its myristoylated N-terminus. Matrix protein is part of the pre-integration complex. Implicated in the release from host cell mediated by Vpu. Binds to RNA. In terms of biological role, forms the conical core that encapsulates the genomic RNA-nucleocapsid complex in the virion. Most core are conical, with only 7% tubular. The core is constituted by capsid protein hexamer subunits. The core is disassembled soon after virion entry. Host restriction factors such as TRIM5-alpha or TRIMCyp bind retroviral capsids and cause premature capsid disassembly, leading to blocks in reverse transcription. Capsid restriction by TRIM5 is one of the factors which restricts HIV-1 to the human species. Host PIN1 apparently facilitates the virion uncoating. On the other hand, interactions with PDZD8 or CYPA stabilize the capsid. Functionally, encapsulates and protects viral dimeric unspliced genomic RNA (gRNA). Binds these RNAs through its zinc fingers. Acts as a nucleic acid chaperone which is involved in rearangement of nucleic acid secondary structure during gRNA retrotranscription. Also facilitates template switch leading to recombination. As part of the polyprotein, participates in gRNA dimerization, packaging, tRNA incorporation and virion assembly. Aspartyl protease that mediates proteolytic cleavages of Gag and Gag-Pol polyproteins during or shortly after the release of the virion from the plasma membrane. Cleavages take place as an ordered, step-wise cascade to yield mature proteins. This process is called maturation. Displays maximal activity during the budding process just prior to particle release from the cell. Also cleaves Nef and Vif, probably concomitantly with viral structural proteins on maturation of virus particles. Hydrolyzes host EIF4GI and PABP1 in order to shut off the capped cellular mRNA translation. The resulting inhibition of cellular protein synthesis serves to ensure maximal viral gene expression and to evade host immune response. Also mediates cleavage of host YTHDF3. Mediates cleavage of host CARD8, thereby activating the CARD8 inflammasome, leading to the clearance of latent HIV-1 in patient CD4(+) T-cells after viral reactivation; in contrast, HIV-1 can evade CARD8-sensing when its protease remains inactive in infected cells prior to viral budding. Its function is as follows. Multifunctional enzyme that converts the viral RNA genome into dsDNA in the cytoplasm, shortly after virus entry into the cell. This enzyme displays a DNA polymerase activity that can copy either DNA or RNA templates, and a ribonuclease H (RNase H) activity that cleaves the RNA strand of RNA-DNA heteroduplexes in a partially processive 3' to 5' endonucleasic mode. Conversion of viral genomic RNA into dsDNA requires many steps. A tRNA(3)-Lys binds to the primer-binding site (PBS) situated at the 5'-end of the viral RNA. RT uses the 3' end of the tRNA primer to perform a short round of RNA-dependent minus-strand DNA synthesis. The reading proceeds through the U5 region and ends after the repeated (R) region which is present at both ends of viral RNA. The portion of the RNA-DNA heteroduplex is digested by the RNase H, resulting in a ssDNA product attached to the tRNA primer. This ssDNA/tRNA hybridizes with the identical R region situated at the 3' end of viral RNA. This template exchange, known as minus-strand DNA strong stop transfer, can be either intra- or intermolecular. RT uses the 3' end of this newly synthesized short ssDNA to perform the RNA-dependent minus-strand DNA synthesis of the whole template. RNase H digests the RNA template except for two polypurine tracts (PPTs) situated at the 5'-end and near the center of the genome. It is not clear if both polymerase and RNase H activities are simultaneous. RNase H probably can proceed both in a polymerase-dependent (RNA cut into small fragments by the same RT performing DNA synthesis) and a polymerase-independent mode (cleavage of remaining RNA fragments by free RTs). Secondly, RT performs DNA-directed plus-strand DNA synthesis using the PPTs that have not been removed by RNase H as primers. PPTs and tRNA primers are then removed by RNase H. The 3' and 5' ssDNA PBS regions hybridize to form a circular dsDNA intermediate. Strand displacement synthesis by RT to the PBS and PPT ends produces a blunt ended, linear dsDNA copy of the viral genome that includes long terminal repeats (LTRs) at both ends. In terms of biological role, catalyzes viral DNA integration into the host chromosome, by performing a series of DNA cutting and joining reactions. This enzyme activity takes place after virion entry into a cell and reverse transcription of the RNA genome in dsDNA. The first step in the integration process is 3' processing. This step requires a complex comprising the viral genome, matrix protein, Vpr and integrase. This complex is called the pre-integration complex (PIC). The integrase protein removes 2 nucleotides from each 3' end of the viral DNA, leaving recessed CA OH's at the 3' ends. In the second step, the PIC enters cell nucleus. This process is mediated through integrase and Vpr proteins, and allows the virus to infect a non dividing cell. This ability to enter the nucleus is specific of lentiviruses, other retroviruses cannot and rely on cell division to access cell chromosomes. In the third step, termed strand transfer, the integrase protein joins the previously processed 3' ends to the 5' ends of strands of target cellular DNA at the site of integration. The 5'-ends are produced by integrase-catalyzed staggered cuts, 5 bp apart. A Y-shaped, gapped, recombination intermediate results, with the 5'-ends of the viral DNA strands and the 3' ends of target DNA strands remaining unjoined, flanking a gap of 5 bp. The last step is viral DNA integration into host chromosome. This involves host DNA repair synthesis in which the 5 bp gaps between the unjoined strands are filled in and then ligated. Since this process occurs at both cuts flanking the HIV genome, a 5 bp duplication of host DNA is produced at the ends of HIV-1 integration. Alternatively, Integrase may catalyze the excision of viral DNA just after strand transfer, this is termed disintegration. The polypeptide is Gag-Pol polyprotein (gag-pol) (Human immunodeficiency virus type 1 group M subtype B (isolate MN) (HIV-1)).